The following is a 406-amino-acid chain: Sorting nexin-6 (406 aa).

Residue Met1 is modified to N-acetylmethionine. At Met2 the chain carries N-acetylmethionine; in Sorting nexin-6, N-terminally processed. The tract at residues 2-179 (MEGLDDGPDF…NQDLSVRGKN (178 aa)) is interaction with PIM1. A PX domain is found at 26 to 173 (LQSDAALQVD…HVFLEYNQDL (148 aa)). A 1,2-diacyl-sn-glycero-3-phospho-(1D-myo-inositol-4,5-bisphosphate) is bound by residues 41 to 47 (SERDKVK), 100 to 106 (FDASREK), and 114 to 117 (EGSM). A phosphoserine mark is found at Ser116 and Ser194. Residues 182 to 199 (EKLEDFFKNMVKSADGVI) are membrane-binding amphipathic helix. One can recognise a BAR domain in the interval 203–406 (VKDVDDFFEH…NCLAVLNGDT (204 aa)).

The protein belongs to the sorting nexin family. Forms heterodimers with BAR domain-containing sorting nexins SNX1 and SNX2. The heterodimers are proposed to self-assemble into helical arrays on the membrane to stabilize and expand local membrane curvature underlying endosomal tubule formation. Thought to be a component of the originally described retromer complex (also called SNX-BAR retromer) which is a pentamer containing the heterotrimeric retromer cargo-selective complex (CSC), also described as vacuolar protein sorting subcomplex (VPS), and a heterodimeric membrane-deforming subcomplex formed between SNX1 or SNX2 and SNX5 or SNX6 (also called SNX-BAR subcomplex); the respective CSC and SNX-BAR subcomplexes associate with low affinity. Interacts with SNX1, SNX2, VPS26A, VPS29, VPS35, TGFB receptors, BACE1, BRMS1, PIP5K1C. Interacts with DCTN1; the association with DCTN1 is involved in movement of retromer-c ontaining vesicles toward the TGN. Interacts with PIM1; translocating SNX6 to the nucleus. Interacts with CDKN1B and GIT1. In vitro phosphorylated by PIM1; not affecting PIM1-dependent nuclear translocation.

The protein resides in the early endosome membrane. Its subcellular location is the cytoplasmic vesicle. The protein localises to the cytoplasm. It localises to the nucleus. Its function is as follows. Involved in several stages of intracellular trafficking. Interacts with membranes phosphatidylinositol 3,4-bisphosphate and/or phosphatidylinositol 4,5-bisphosphate. Acts in part as component of the retromer membrane-deforming SNX-BAR subcomplex. The SNX-BAR retromer mediates retrograde transport of cargo proteins from endosomes to the trans-Golgi network (TGN) and is involved in endosome-to-plasma membrane transport for cargo protein recycling. The SNX-BAR subcomplex functions to deform the donor membrane into a tubular profile called endosome-to-TGN transport carrier (ETC). Does not have in vitro vesicle-to-membrane remodeling activity. Involved in retrograde endosome-to-TGN transport of lysosomal enzyme receptor IGF2R. May function as link between transport vesicles and dynactin. Negatively regulates retrograde transport of BACE1 from the cell surface to the trans-Golgi network. Involved in E-cadherin sorting and degradation; inhibits PIP5K1C-mediated E-cadherin degradation. In association with GIT1 involved in EGFR degradation. Promotes lysosomal degradation of CDKN1B. May contribute to transcription regulation. The sequence is that of Sorting nexin-6 (SNX6) from Pongo abelii (Sumatran orangutan).